Reading from the N-terminus, the 137-residue chain is Integration host factor subunit beta (137 aa).

Residues 75–92 are compositionally biased toward basic and acidic residues; sequence KRVPHFKAGKELRERVDR. The disordered stretch occupies residues 75 to 137; it reads KRVPHFKAGK…EGGGLNLARS (63 aa). The span at 128–137 shows a compositional bias: gly residues; the sequence is EGGGLNLARS.

Belongs to the bacterial histone-like protein family. As to quaternary structure, heterodimer of an alpha and a beta chain.

Functionally, this protein is one of the two subunits of integration host factor, a specific DNA-binding protein that functions in genetic recombination as well as in transcriptional and translational control. This is Integration host factor subunit beta from Cupriavidus pinatubonensis (strain JMP 134 / LMG 1197) (Cupriavidus necator (strain JMP 134)).